A 319-amino-acid chain; its full sequence is DNA-directed RNA polymerases II, IV and V subunit 3 (319 aa).

N-acetylmethionine is present on M1.

Belongs to the archaeal Rpo3/eukaryotic RPB3 RNA polymerase subunit family. As to quaternary structure, component of the RNA polymerase II complex consisting of at least 12 subunits. Interacts with SHH1, CLSY1, NRPB11 and NRPD1. Interacts with IYO.

It is found in the nucleus. In terms of biological role, DNA-dependent RNA polymerase catalyzes the transcription of DNA into RNA using the four ribonucleoside triphosphates as substrates. Component of RNA polymerase II which synthesizes mRNA precursors and many functional non-coding RNAs. Pol II is the central component of the basal RNA polymerase II transcription machinery. It is composed of mobile elements that move relative to each other. NRPB3 is part of the core element with the central large cleft and the clamp element that moves to open and close the cleft. Component of RNA polymerases IV and V which mediate short-interfering RNAs (siRNA) accumulation and subsequent RNA-directed DNA methylation-dependent (RdDM) transcriptional gene silencing (TGS) of endogenous repeated sequences, including transposable elements. In Arabidopsis thaliana (Mouse-ear cress), this protein is DNA-directed RNA polymerases II, IV and V subunit 3 (NRPB3).